Consider the following 256-residue polypeptide: MIHAFAVSVIRHERTLLEQINFRLNPGELVVTLGPNGAGKSTLLKTLAGDLPPSHGHVLLDDEPISQFSLSQLSRRRAVLSQSVHLDFPFSAMEVVLMGAQRTLSGGDPFRLSQQALEEVDAGHLAQRNYQDLSGGERQRVQIARALTQLWTGVGAGPQYLMLDEPTSALDLKHQSALLKLARKLAGKGVGVFCVLHDLHLAAQYADRILLMNHGRIVAEGAPETLITTANVREVYQVDSRILPHPVTQRPMVMID.

An ABC transporter domain is found at 2-239; sequence IHAFAVSVIR…ANVREVYQVD (238 aa). 34–41 contacts ATP; that stretch reads GPNGAGKS.

Belongs to the ABC transporter superfamily. Heme (hemin) importer (TC 3.A.1.14.5) family. The complex is composed of two ATP-binding proteins (HmuV), two transmembrane proteins (HmuU) and a solute-binding protein (HmuT).

The protein localises to the cell inner membrane. Its function is as follows. Part of the ABC transporter complex HmuTUV involved in hemin import. Responsible for energy coupling to the transport system. This chain is Hemin import ATP-binding protein HmuV, found in Hahella chejuensis (strain KCTC 2396).